A 232-amino-acid chain; its full sequence is Large ribosomal subunit protein uL1 (232 aa).

This sequence belongs to the universal ribosomal protein uL1 family. As to quaternary structure, part of the 50S ribosomal subunit.

Binds directly to 23S rRNA. The L1 stalk is quite mobile in the ribosome, and is involved in E site tRNA release. Its function is as follows. Protein L1 is also a translational repressor protein, it controls the translation of the L11 operon by binding to its mRNA. This chain is Large ribosomal subunit protein uL1, found in Aromatoleum aromaticum (strain DSM 19018 / LMG 30748 / EbN1) (Azoarcus sp. (strain EbN1)).